The following is a 146-amino-acid chain: Hemoglobin subunit beta (146 aa).

Residue V1 is modified to N-acetylvaline. The 145-residue stretch at 2-146 (HLTGEEKAAV…VATALAHKYH (145 aa)) folds into the Globin domain. At T12 the chain carries Phosphothreonine. S44 bears the Phosphoserine mark. N6-acetyllysine is present on K59. H63 is a heme b binding site. An N6-acetyllysine modification is found at K82. Residue H92 coordinates heme b. C93 carries the S-nitrosocysteine modification. Residue K144 is modified to N6-acetyllysine.

It belongs to the globin family. In terms of assembly, heterotetramer of two alpha chains and two beta chains. As to expression, red blood cells.

Its function is as follows. Involved in oxygen transport from the lung to the various peripheral tissues. The sequence is that of Hemoglobin subunit beta (HBB) from Macroderma gigas (Australian ghost bat).